The following is a 239-amino-acid chain: Tetraspanin-9 (239 aa).

Residues 1 to 13 (MARGCLCCLKYTM) are Cytoplasmic-facing. A helical transmembrane segment spans residues 14-34 (FLFNLIFWLCGCGLLGVGIWL). Topologically, residues 35–55 (SVSQGNFATFSPSFPSLSAAN) are extracellular. The helical transmembrane segment at 56 to 76 (LVIAIGTIVMVTGFLGCLGAI) threads the bilayer. The Cytoplasmic segment spans residues 77-85 (KENKCLLLS). Residues 86-106 (FFIVLLIILLAELILIILFFV) form a helical membrane-spanning segment. Over 107 to 203 (YMDKVNENAK…VKLWFDDNKH (97 aa)) the chain is Extracellular. Asn180 is a glycosylation site (N-linked (GlcNAc...) asparagine). A helical transmembrane segment spans residues 204 to 224 (VLGTVGMCILIMQILGMAFSM). Residues 225 to 239 (TLFQHIHRTGKKYDA) lie on the Cytoplasmic side of the membrane.

It belongs to the tetraspanin (TM4SF) family. In terms of assembly, found in a complex with GP6. Glycosylated. Strongly expressed in megakaryocytes, platelets and lung. Weakly expressed in bone marrow, brain and kidney (at protein level).

It is found in the membrane. This Mus musculus (Mouse) protein is Tetraspanin-9 (Tspan9).